The primary structure comprises 424 residues: Histidine--tRNA ligase (424 aa).

This sequence belongs to the class-II aminoacyl-tRNA synthetase family. Homodimer.

The protein localises to the cytoplasm. The enzyme catalyses tRNA(His) + L-histidine + ATP = L-histidyl-tRNA(His) + AMP + diphosphate + H(+). The sequence is that of Histidine--tRNA ligase from Yersinia pestis bv. Antiqua (strain Antiqua).